Here is a 273-residue protein sequence, read N- to C-terminus: Ribosomal RNA small subunit methyltransferase A (273 aa).

S-adenosyl-L-methionine contacts are provided by N18, L20, G45, E66, D91, and N113.

This sequence belongs to the class I-like SAM-binding methyltransferase superfamily. rRNA adenine N(6)-methyltransferase family. RsmA subfamily.

Its subcellular location is the cytoplasm. The enzyme catalyses adenosine(1518)/adenosine(1519) in 16S rRNA + 4 S-adenosyl-L-methionine = N(6)-dimethyladenosine(1518)/N(6)-dimethyladenosine(1519) in 16S rRNA + 4 S-adenosyl-L-homocysteine + 4 H(+). Specifically dimethylates two adjacent adenosines (A1518 and A1519) in the loop of a conserved hairpin near the 3'-end of 16S rRNA in the 30S particle. May play a critical role in biogenesis of 30S subunits. This Escherichia coli O1:K1 / APEC protein is Ribosomal RNA small subunit methyltransferase A.